Consider the following 405-residue polypeptide: Tryptophan synthase beta chain (405 aa).

Lysine 98 is subject to N6-(pyridoxal phosphate)lysine.

It belongs to the TrpB family. As to quaternary structure, tetramer of two alpha and two beta chains. Pyridoxal 5'-phosphate is required as a cofactor.

The catalysed reaction is (1S,2R)-1-C-(indol-3-yl)glycerol 3-phosphate + L-serine = D-glyceraldehyde 3-phosphate + L-tryptophan + H2O. The protein operates within amino-acid biosynthesis; L-tryptophan biosynthesis; L-tryptophan from chorismate: step 5/5. Its function is as follows. The beta subunit is responsible for the synthesis of L-tryptophan from indole and L-serine. This chain is Tryptophan synthase beta chain, found in Parvibaculum lavamentivorans (strain DS-1 / DSM 13023 / NCIMB 13966).